A 493-amino-acid polypeptide reads, in one-letter code: Neuronal acetylcholine receptor subunit alpha-6 (493 aa).

An N-terminal signal peptide occupies residues 1–30 (MLNGWGRGDLRSGLCLWICGFLAFFKGSRG). Residues 31–240 (CVSEEQLFHT…TYSFYIRRLP (210 aa)) lie on the Extracellular side of the membrane. Asn-54 and Asn-171 each carry an N-linked (GlcNAc...) asparagine glycan. 2 cysteine pairs are disulfide-bonded: Cys-158–Cys-172 and Cys-222–Cys-223. 3 consecutive transmembrane segments (helical) span residues 241-265 (MFYTINLIIPCLFISFLTVLVFYLP), 272-290 (VTLCISVLLSLTVFLLVIT), and 306-327 (YLLFTMIFVTLSIVVTVFVLNI). The Cytoplasmic portion of the chain corresponds to 328–464 (HYRTPATHTM…WKYMAMVVDR (137 aa)). At Ser-401 the chain carries Phosphoserine. A helical transmembrane segment spans residues 465–484 (VFLWVFIIVCVFGTVGLFLQ).

This sequence belongs to the ligand-gated ion channel (TC 1.A.9) family. Acetylcholine receptor (TC 1.A.9.1) subfamily. Alpha-6/CHRNA6 sub-subfamily. As to quaternary structure, neuronal AChR is composed of two different types of subunits: alpha and non-alpha (beta). CHRNA6/alpha-6 subunit can be combined to CHRNB2/beta-2 and CHRNA4/alpha-4 to give rise to functional receptors. Interacts with LYPD6. As to expression, predominantly expressed in only a few brain areas, including dopaminergic neurons, norepirephrine neurons and cells of the visual system.

The protein localises to the synaptic cell membrane. The enzyme catalyses Ca(2+)(in) = Ca(2+)(out). It catalyses the reaction K(+)(in) = K(+)(out). The catalysed reaction is Na(+)(in) = Na(+)(out). Activated by a myriad of ligands such as acetylcholine, cytisine and nicotine. CHRNA6 nAChR activity is inhibited by the antagonists alpha-conotoxin MII and PIA, a small disulfide-constrained peptides from cone snails. In terms of biological role, component of neuronal acetylcholine receptors (nAChRs) that function as pentameric, ligand-gated cation channels with high calcium permeability among other activities. nAChRs are excitatory neurotrasnmitter receptors formed by a collection of nAChR subunits known to mediate synaptic transmission in the nervous system and the neuromuscular junction. Each nAchR subunit confers differential attributes to channel properties, including activation, deactivation and desensitization kinetics, pH sensitivity, cation permeability, and binding to allosteric modulators. CHRNA6 forms pentameric channels with CHRNB2 and CHRNA4 that exhibit high sensitivity to ACh and nicotine and are predominantly expressed in only a few brain areas, including dopaminergic neurons, norepirephrine neurons and cells of the visual system. nAChrs containing CHRNA6 subunits mediate endogenous cholinergic modulation of dopamine and gamma-aminobutyric acid (GABA) release in response to nicotine at nerve terminals. The protein is Neuronal acetylcholine receptor subunit alpha-6 (Chrna6) of Rattus norvegicus (Rat).